The chain runs to 390 residues: Nucleosome assembly protein 1-like 1 (390 aa).

Basic and acidic residues predominate over residues 1–10 (MADIDNKEQS). Residues 1–32 (MADIDNKEQSELDQDLEDVEEVEEEETGEETK) are disordered. An N-acetylalanine modification is found at Ala2. Ser10 is modified (phosphoserine). The segment covering 11-28 (ELDQDLEDVEEVEEEETG) has biased composition (acidic residues). Phosphothreonine occurs at positions 62 and 64. Ser69 is modified (phosphoserine). The residue at position 116 (Lys116) is an N6-acetyllysine. Residues 125 to 150 (YEPTEEECEWKPDEEDEVSEELKEKA) carry the NAP1L motif motif. Residues 131-143 (ECEWKPDEEDEVS) show a composition bias toward acidic residues. Residues 131–163 (ECEWKPDEEDEVSEELKEKAKIEDEKKDEEKED) are disordered. Position 143 is a phosphoserine (Ser143). The span at 144-163 (EELKEKAKIEDEKKDEEKED) shows a compositional bias: basic and acidic residues. Residues 272–278 (IKKKQKH) carry the Nuclear localization signal motif. Residues 345–375 (AIEDDDDDYDEEGEEADEEGEEEGDEENDPD) show a composition bias toward acidic residues. Residues 345–390 (AIEDDDDDYDEEGEEADEEGEEEGDEENDPDYDPKKDQNPAECKQQ) form a disordered region. 2 positions are modified to 5-glutamyl polyglycine: Glu358 and Glu359. A compositionally biased stretch (basic and acidic residues) spans 376–390 (YDPKKDQNPAECKQQ). The residue at position 387 (Cys387) is a Cysteine methyl ester. Cys387 carries S-farnesyl cysteine lipidation. Residues 388–390 (KQQ) constitute a propeptide, removed in mature form.

The protein belongs to the nucleosome assembly protein (NAP) family. In terms of assembly, homodimer. The dimer binds strongly and sequentially to single and double H2A-H2B heterodimers. Interacts with ERCC6; this interaction increases ERCC6 processivity. Interacts with RAD54. Interacts with SETD1A. Post-translationally, polyglycylated by TTLL10 on glutamate residues, resulting in polyglycine chains on the gamma-carboxyl group. Both polyglutamylation and polyglycylation modifications can coexist on the same protein on adjacent residues, and lowering polyglycylation levels increases polyglutamylation, and reciprocally. In terms of processing, polyglutamylated by TTLL4 on glutamate residues, resulting in polyglutamate chains on the gamma-carboxyl group. Both polyglutamylation and polyglycylation modifications can coexist on the same protein on adjacent residues, and lowering polyglycylation levels increases polyglutamylation, and reciprocally.

It is found in the nucleus. It localises to the melanosome. Its subcellular location is the cytoplasm. Its function is as follows. Histone chaperone that plays a role in the nuclear import of H2A-H2B and nucleosome assembly. Also participates in several important DNA repair mechanisms: greatly enhances ERCC6-mediated chromatin remodeling which is essential for transcription-coupled nucleotide excision DNA repair. Also stimulates homologous recombination (HR) by RAD51 and RAD54 which is essential in mitotic DNA double strand break (DSB) repair. Plays a key role in the regulation of embryonic neurogenesis. Promotes the proliferation of neural progenitors and inhibits neuronal differentiation during cortical development. Regulates neurogenesis via the modulation of RASSF10; regulates RASSF10 expression by promoting SETD1A-mediated H3K4 methylation at the RASSF10 promoter. The protein is Nucleosome assembly protein 1-like 1 (Nap1l1) of Rattus norvegicus (Rat).